The chain runs to 210 residues: Uridine kinase (210 aa).

Residue glycine 12–threonine 19 participates in ATP binding.

Belongs to the uridine kinase family.

It is found in the cytoplasm. It carries out the reaction uridine + ATP = UMP + ADP + H(+). The enzyme catalyses cytidine + ATP = CMP + ADP + H(+). It functions in the pathway pyrimidine metabolism; CTP biosynthesis via salvage pathway; CTP from cytidine: step 1/3. The protein operates within pyrimidine metabolism; UMP biosynthesis via salvage pathway; UMP from uridine: step 1/1. The protein is Uridine kinase of Streptococcus gordonii (strain Challis / ATCC 35105 / BCRC 15272 / CH1 / DL1 / V288).